A 226-amino-acid chain; its full sequence is Ribonuclease 3 (226 aa).

The region spanning 7-129 (LPRLCRTLSY…IIGAVYLDSD (123 aa)) is the RNase III domain. Glu42 lines the Mg(2+) pocket. Asp46 is a catalytic residue. Residues Asp115 and Glu118 each coordinate Mg(2+). Glu118 is an active-site residue. The region spanning 156 to 226 (DAKTLLQEHL…AAQVLELLKK (71 aa)) is the DRBM domain.

This sequence belongs to the ribonuclease III family. In terms of assembly, homodimer. It depends on Mg(2+) as a cofactor.

The protein localises to the cytoplasm. It catalyses the reaction Endonucleolytic cleavage to 5'-phosphomonoester.. Functionally, digests double-stranded RNA. Involved in the processing of primary rRNA transcript to yield the immediate precursors to the large and small rRNAs (23S and 16S). Processes some mRNAs, and tRNAs when they are encoded in the rRNA operon. Processes pre-crRNA and tracrRNA of type II CRISPR loci if present in the organism. The sequence is that of Ribonuclease 3 from Shewanella baltica (strain OS223).